The following is a 96-amino-acid chain: Teretoxin Tgu6.1 (96 aa).

The N-terminal stretch at 1–16 (MRPFLVFVLIVSVSLA) is a signal peptide. Positions 17 to 52 (FSFEDMPNKGGDSVASITADQARGHKRNPLFPFAQR) are excised as a propeptide.

Contains 3 disulfide bonds. Expressed by the venom duct.

The protein resides in the secreted. Its function is as follows. The recombinant protein causes paralysis to polychaete worms (Nereis virens), the natural prey of terebrid snails. This Terebra guttata (White spotted auger snail) protein is Teretoxin Tgu6.1.